The primary structure comprises 593 residues: Auxin response factor 12 (593 aa).

Positions 126 to 228 (FTKVLTASDT…ELRVGIRRAR (103 aa)) form a DNA-binding region, TF-B3. Residues 511–592 (RTCTKVQMQG…MVKKIFIQKR (82 aa)) form the PB1 domain.

It belongs to the ARF family. Homodimers and heterodimers.

The protein localises to the nucleus. Its function is as follows. Auxin response factors (ARFs) are transcriptional factors that bind specifically to the DNA sequence 5'-TGTCTC-3' found in the auxin-responsive promoter elements (AuxREs). Could act as transcriptional activator or repressor. Formation of heterodimers with Aux/IAA proteins may alter their ability to modulate early auxin response genes expression. The protein is Auxin response factor 12 (ARF12) of Arabidopsis thaliana (Mouse-ear cress).